Reading from the N-terminus, the 222-residue chain is MDSRMLSDQRFCRRIFAAALCVLVLLADSGCARNLWKRALHLKMTEKYDDYEYPLHSHSAHYQKNDRCPPPPQTLPDRACEVPSCRSDSECERHKRCCYNGCIYACLESVQPPPVLDWLVQPKPRWLGGNGWLLDGPEEVLQAEACSTTEDGDEPLHCPTGYECHIINPGNTAEGIPNRGQCIKLRGNPDGRNLRHKYYKEYFGSNSNNVVGYVKNQQKHLG.

The first 32 residues, 1–32 (MDSRMLSDQRFCRRIFAAALCVLVLLADSGCA), serve as a signal peptide directing secretion. The region spanning 61–110 (HYQKNDRCPPPPQTLPDRACEVPSCRSDSECERHKRCCYNGCIYACLESV) is the WAP domain. Disulfide bonds link cysteine 68-cysteine 98, cysteine 80-cysteine 102, cysteine 85-cysteine 97, and cysteine 91-cysteine 106.

The protein resides in the secreted. Functionally, has growth inhibitory activity. In Gallus gallus (Chicken), this protein is WAP four-disulfide core domain protein 1 (WFDC1).